The sequence spans 678 residues: UvrABC system protein C (678 aa).

The GIY-YIG domain occupies 16–95 (VEPGVYRFRD…IKEFDPRFNI (80 aa)). Residues 208-243 (DRLIREMEQQMTAAAEDLDFERAARLRDNIGAMRRA) enclose the UVR domain. A compositionally biased stretch (low complexity) spans 649–667 (EAPPEPGAEAPPDSGAAAA). A disordered region spans residues 649–678 (EAPPEPGAEAPPDSGAAAAVMGNDQSRVPG).

The protein belongs to the UvrC family. Interacts with UvrB in an incision complex.

The protein localises to the cytoplasm. Its function is as follows. The UvrABC repair system catalyzes the recognition and processing of DNA lesions. UvrC both incises the 5' and 3' sides of the lesion. The N-terminal half is responsible for the 3' incision and the C-terminal half is responsible for the 5' incision. In Mycolicibacterium gilvum (strain PYR-GCK) (Mycobacterium gilvum (strain PYR-GCK)), this protein is UvrABC system protein C.